A 404-amino-acid polypeptide reads, in one-letter code: Lupus La protein homolog (404 aa).

Residues 7–99 form the HTH La-type RNA-binding domain; the sequence is NEKMAALEAK…RRSPSKPLPE (93 aa). 2 positions are modified to phosphoserine: S92 and S94. The 77-residue stretch at 111-187 folds into the RRM domain; it reads RSVYIKGFPT…TDLLILFKED (77 aa). At K116 the chain carries N6-acetyllysine. Residue T120 is modified to Phosphothreonine. At K128 the chain carries N6-acetyllysine. S225 is subject to Phosphoserine. Residues 227–348 enclose the xRRM domain; sequence EEKIGCLLKF…KGKGNKAAQA (122 aa). N6-acetyllysine occurs at positions 328 and 341. The segment covering 329-342 has biased composition (basic residues); that stretch reads WKSKGRRFKGKGKG. A disordered region spans residues 329 to 404; it reads WKSKGRRFKG…QKTENGAGDQ (76 aa). Low complexity predominate over residues 343–354; it reads NKAAQAGSAKGK. Residue K360 is modified to N6-acetyllysine. Position 362 is a phosphothreonine (T362). S366 is subject to Phosphoserine. Residues 381–391 show a composition bias toward basic and acidic residues; sequence RAREETDKEPP.

As to quaternary structure, interacts with DDX15. May interact with RUFY1. Phosphorylated in the C-terminal part of the protein.

Its subcellular location is the nucleus. Functionally, binds to the 3' poly(U) terminus of nascent RNA polymerase III transcripts, protecting them from exonuclease digestion and facilitating their folding and maturation. The sequence is that of Lupus La protein homolog (SSB) from Bos taurus (Bovine).